We begin with the raw amino-acid sequence, 156 residues long: SsrA-binding protein (156 aa).

The segment at 131–156 is disordered; it reads YDKRQTLREQQDKREALRVMRERNRG.

Belongs to the SmpB family.

The protein resides in the cytoplasm. In terms of biological role, required for rescue of stalled ribosomes mediated by trans-translation. Binds to transfer-messenger RNA (tmRNA), required for stable association of tmRNA with ribosomes. tmRNA and SmpB together mimic tRNA shape, replacing the anticodon stem-loop with SmpB. tmRNA is encoded by the ssrA gene; the 2 termini fold to resemble tRNA(Ala) and it encodes a 'tag peptide', a short internal open reading frame. During trans-translation Ala-aminoacylated tmRNA acts like a tRNA, entering the A-site of stalled ribosomes, displacing the stalled mRNA. The ribosome then switches to translate the ORF on the tmRNA; the nascent peptide is terminated with the 'tag peptide' encoded by the tmRNA and targeted for degradation. The ribosome is freed to recommence translation, which seems to be the essential function of trans-translation. In Arthrobacter sp. (strain FB24), this protein is SsrA-binding protein.